Here is a 239-residue protein sequence, read N- to C-terminus: Geranylgeranylglyceryl phosphate synthase (239 aa).

Mg(2+) contacts are provided by aspartate 18 and serine 45. Residues 166–172, 197–198, and 219–220 each bind sn-glycerol 1-phosphate; these read YLEAGSG, GG, and GT.

This sequence belongs to the GGGP/HepGP synthase family. Group II subfamily. The cofactor is Mg(2+).

It is found in the cytoplasm. The catalysed reaction is sn-glycerol 1-phosphate + (2E,6E,10E)-geranylgeranyl diphosphate = sn-3-O-(geranylgeranyl)glycerol 1-phosphate + diphosphate. It functions in the pathway membrane lipid metabolism; glycerophospholipid metabolism. Functionally, prenyltransferase that catalyzes the transfer of the geranylgeranyl moiety of geranylgeranyl diphosphate (GGPP) to the C3 hydroxyl of sn-glycerol-1-phosphate (G1P). This reaction is the first ether-bond-formation step in the biosynthesis of archaeal membrane lipids. This chain is Geranylgeranylglyceryl phosphate synthase, found in Pyrobaculum arsenaticum (strain DSM 13514 / JCM 11321 / PZ6).